A 330-amino-acid chain; its full sequence is GDP-mannose transporter (330 aa).

Over 1–13 (MSQLKVDNGPLSH) the chain is Cytoplasmic. A helical membrane pass occupies residues 14-34 (VANSGPISIGAYCFSSIMMTV). The Lumenal portion of the chain corresponds to 35–48 (TNKFVVNLKGFNMN). Residues 49–69 (FVMLFVQAAVCVNLLFFLRLL) traverse the membrane as a helical segment. Residues 70–81 (GYAKFRPLNRTD) lie on the Cytoplasmic side of the membrane. A helical membrane pass occupies residues 82–98 (AKNWFPITIFLVLMIYT). Over 99–104 (SSKSLQ) the chain is Lumenal. A helical transmembrane segment spans residues 105–124 (YLAVPIYTIFKNLTIILIAY). Topologically, residues 125–138 (GEVLFFGGSVTAME) are cytoplasmic. Residues 139-155 (LSSFLLMVLSSVVATLG) traverse the membrane as a helical segment. The Lumenal portion of the chain corresponds to 156 to 170 (DQQALKKTADAGASL). A helical transmembrane segment spans residues 171–191 (FNIGYMWMFINCLSSAAFVLV). Residues 192–203 (MRKRIKLTNFKD) are Cytoplasmic-facing. Residues 204 to 224 (FDTMFYNNILSMPVLLALSFL) form a helical membrane-spanning segment. Over 225-241 (MEDWSTENLTKNLSRDS) the chain is Lumenal. Residues 242–262 (VTAMIISGMTAVCISYCSGWC) form a helical membrane-spanning segment. The Cytoplasmic portion of the chain corresponds to 263–269 (VRVTSST). Residues 270–290 (TYSMVGALNKLPIALSGLIFF) traverse the membrane as a helical segment. At 291–294 (DAPK) the chain is on the lumenal side. A helical membrane pass occupies residues 295-315 (NFLSIFSIFLGFLSGIVYAVA). Residues 316–330 (KQKKQQNPQPSAPIK) are Cytoplasmic-facing.

It belongs to the TPT transporter family. SLC35D subfamily. Homooligomer.

The protein localises to the golgi apparatus membrane. It localises to the cytoplasmic vesicle membrane. The protein resides in the endoplasmic reticulum membrane. In terms of biological role, involved in the import of GDP-mannose from the cytoplasm into the Golgi lumen. This Kluyveromyces lactis (strain ATCC 8585 / CBS 2359 / DSM 70799 / NBRC 1267 / NRRL Y-1140 / WM37) (Yeast) protein is GDP-mannose transporter (VRG4).